Here is a 378-residue protein sequence, read N- to C-terminus: UDP-N-acetylenolpyruvoylglucosamine reductase (378 aa).

In terms of domain architecture, FAD-binding PCMH-type spans 15-185 (VGGTPERLLE…LSVDLELADH (171 aa)). R163 is an active-site residue. S248 (proton donor) is an active-site residue. E370 is a catalytic residue.

The protein belongs to the MurB family. It depends on FAD as a cofactor.

It localises to the cytoplasm. It carries out the reaction UDP-N-acetyl-alpha-D-muramate + NADP(+) = UDP-N-acetyl-3-O-(1-carboxyvinyl)-alpha-D-glucosamine + NADPH + H(+). Its pathway is cell wall biogenesis; peptidoglycan biosynthesis. In terms of biological role, cell wall formation. The protein is UDP-N-acetylenolpyruvoylglucosamine reductase of Leifsonia xyli subsp. xyli (strain CTCB07).